Reading from the N-terminus, the 96-residue chain is Protein YddL (96 aa).

An N-terminal signal peptide occupies residues 1–21 (MKLKIVAVVVTGLLAANVAHA).

The polypeptide is Protein YddL (yddL) (Escherichia coli (strain K12)).